The following is a 331-amino-acid chain: Flagellar P-ring protein (331 aa).

Residues 1 to 22 (MRKVTIFIIIIVALTGFGSVRI) form the signal peptide.

The protein belongs to the FlgI family. The basal body constitutes a major portion of the flagellar organelle and consists of four rings (L,P,S, and M) mounted on a central rod.

The protein resides in the periplasm. The protein localises to the bacterial flagellum basal body. Its function is as follows. Assembles around the rod to form the L-ring and probably protects the motor/basal body from shearing forces during rotation. This chain is Flagellar P-ring protein, found in Pseudothermotoga lettingae (strain ATCC BAA-301 / DSM 14385 / NBRC 107922 / TMO) (Thermotoga lettingae).